We begin with the raw amino-acid sequence, 319 residues long: Acetyl esterase (319 aa).

The short motif at 91–93 (HGG) is the Involved in the stabilization of the negatively charged intermediate by the formation of the oxyanion hole element. Residues S165, D262, and H292 contribute to the active site.

It belongs to the 'GDXG' lipolytic enzyme family. Homodimer. Interacts with MalT and MelA.

The protein localises to the cytoplasm. Its function is as follows. Displays esterase activity towards short chain fatty esters (acyl chain length of up to 8 carbons). Able to hydrolyze triacetylglycerol (triacetin) and tributyrylglycerol (tributyrin), but not trioleylglycerol (triolein) or cholesterol oleate. Negatively regulates MalT activity by antagonizing maltotriose binding. Inhibits MelA galactosidase activity. The chain is Acetyl esterase from Shigella flexneri.